We begin with the raw amino-acid sequence, 640 residues long: MVKITYPDNSVQEFKDGITPAEIAKGISEGLYRNAIAAEINGELKDLNTPIMQDSTIKLITLDDEIAPKIYRHTMAHIMAQAVARIFGEDRVKLAIGPVIENGFYYDFDIEGHNLSEEDFSKIEEEMKKIIKEDIKIIRKEVNKKEAIELFKDQPYKLELIEELEEDTISVYFQGDFYDLCRGPHLPSTGYVKYFKLLSVSGAYWRGDEKNKMLQRIYGTAFPKKEQLDDYLNMIEEAKRRDHRKLGPKLNLFMLQSEMAPGMPFFLPNGKIVLNELMAYSRQVHKKYGYVEVETPQIMNIKLWHQSGHWDHYKENMFFTEKEDMPMAVKPMNCPGHILIYKNNFVSYRDLPIRMFEFGKVHRYERSGVLHGLFRVRAFTQDDAHIFCMPSQMEEEIIKVIQLTNEIFSTFGFKYEAILSTMPEDHMGDIESWERATDALKKALEKSNMEYRIDEGEGAFYGPKIDFNVTDSLGRKWQCTTIQLDFQMPERFDMVYADENDAQKRPVMIHRAIFGSLERFFGILIENFAGEFPTWLSPVQVSILPVSEKFNEEAKKFSRILEQEGIRVYVNDSDATVGYKIRNEQMKKVPYMIVFGEKEMNSDTINIRTRKGDTIENVSKERFIEEIKNEIKNRNLDLTF.

A TGS domain is found at 1-61; sequence MVKITYPDNS…MQDSTIKLIT (61 aa). The catalytic stretch occupies residues 242-533; it reads DHRKLGPKLN…LIENFAGEFP (292 aa). Cys-334, His-385, and His-510 together coordinate Zn(2+).

Belongs to the class-II aminoacyl-tRNA synthetase family. In terms of assembly, homodimer. It depends on Zn(2+) as a cofactor.

It is found in the cytoplasm. The enzyme catalyses tRNA(Thr) + L-threonine + ATP = L-threonyl-tRNA(Thr) + AMP + diphosphate + H(+). Its function is as follows. Catalyzes the attachment of threonine to tRNA(Thr) in a two-step reaction: L-threonine is first activated by ATP to form Thr-AMP and then transferred to the acceptor end of tRNA(Thr). Also edits incorrectly charged L-seryl-tRNA(Thr). This chain is Threonine--tRNA ligase, found in Petrotoga mobilis (strain DSM 10674 / SJ95).